The sequence spans 429 residues: L-threonine dehydratase biosynthetic IlvA (429 aa).

An N6-(pyridoxal phosphate)lysine modification is found at lysine 66. Residues asparagine 93, 196-200 (GGGGC), and serine 322 contribute to the pyridoxal 5'-phosphate site. Residues 346–420 (HYFLVDFPQE…TDIHVEALEP (75 aa)) form the ACT-like domain.

It belongs to the serine/threonine dehydratase family. Homotetramer. It depends on pyridoxal 5'-phosphate as a cofactor.

It catalyses the reaction L-threonine = 2-oxobutanoate + NH4(+). The protein operates within amino-acid biosynthesis; L-isoleucine biosynthesis; 2-oxobutanoate from L-threonine: step 1/1. Its function is as follows. Catalyzes the anaerobic formation of alpha-ketobutyrate and ammonia from threonine in a two-step reaction. The first step involved a dehydration of threonine and a production of enamine intermediates (aminocrotonate), which tautomerizes to its imine form (iminobutyrate). Both intermediates are unstable and short-lived. The second step is the nonenzymatic hydrolysis of the enamine/imine intermediates to form 2-ketobutyrate and free ammonia. In the low water environment of the cell, the second step is accelerated by RidA. The chain is L-threonine dehydratase biosynthetic IlvA (ilvA) from Mycobacterium bovis (strain ATCC BAA-935 / AF2122/97).